A 188-amino-acid chain; its full sequence is Protein salivary glands marred (188 aa).

Belongs to the TNFAIP8 family. As to quaternary structure, interacts with the Ste20-like MAP kinase msn.

It is found in the cytoplasm. The protein localises to the cytoskeleton. Functionally, important for modulating JNK signaling, cytoskeletal remodeling and autophagy in larval salivary glands. During salivary gland development, involved in the positive regulation of the JNK signaling pathway, acting downstream of the TNF ligand egr and upstream of bsk. This chain is Protein salivary glands marred, found in Drosophila melanogaster (Fruit fly).